We begin with the raw amino-acid sequence, 181 residues long: Protein GrpE (181 aa).

The protein belongs to the GrpE family. Homodimer.

The protein localises to the cytoplasm. In terms of biological role, participates actively in the response to hyperosmotic and heat shock by preventing the aggregation of stress-denatured proteins, in association with DnaK and GrpE. It is the nucleotide exchange factor for DnaK and may function as a thermosensor. Unfolded proteins bind initially to DnaJ; upon interaction with the DnaJ-bound protein, DnaK hydrolyzes its bound ATP, resulting in the formation of a stable complex. GrpE releases ADP from DnaK; ATP binding to DnaK triggers the release of the substrate protein, thus completing the reaction cycle. Several rounds of ATP-dependent interactions between DnaJ, DnaK and GrpE are required for fully efficient folding. The polypeptide is Protein GrpE (Delftia acidovorans (strain DSM 14801 / SPH-1)).